Here is a 449-residue protein sequence, read N- to C-terminus: Glucose-6-phosphate isomerase (449 aa).

The Proton donor role is filled by glutamate 291. Active-site residues include histidine 312 and lysine 426.

The protein belongs to the GPI family.

The protein resides in the cytoplasm. The catalysed reaction is alpha-D-glucose 6-phosphate = beta-D-fructose 6-phosphate. Its pathway is carbohydrate biosynthesis; gluconeogenesis. It functions in the pathway carbohydrate degradation; glycolysis; D-glyceraldehyde 3-phosphate and glycerone phosphate from D-glucose: step 2/4. Catalyzes the reversible isomerization of glucose-6-phosphate to fructose-6-phosphate. The polypeptide is Glucose-6-phosphate isomerase (Streptococcus pneumoniae serotype 19F (strain G54)).